The primary structure comprises 329 residues: Malate dehydrogenase (329 aa).

13 to 19 (GAAGNIS) contacts NAD(+). Substrate is bound by residues Arg94 and Arg100. NAD(+) contacts are provided by residues Asn107, Gln114, and 131 to 133 (VGN). Residues Asn133 and Arg164 each contribute to the substrate site. Catalysis depends on His189, which acts as the Proton acceptor.

Belongs to the LDH/MDH superfamily. MDH type 2 family.

It carries out the reaction (S)-malate + NAD(+) = oxaloacetate + NADH + H(+). Functionally, catalyzes the reversible oxidation of malate to oxaloacetate. The polypeptide is Malate dehydrogenase (Psychrobacter arcticus (strain DSM 17307 / VKM B-2377 / 273-4)).